Consider the following 615-residue polypeptide: Dihydroxy-acid dehydratase (615 aa).

Residue aspartate 81 participates in Mg(2+) binding. Cysteine 122 is a binding site for [2Fe-2S] cluster. Aspartate 123 and lysine 124 together coordinate Mg(2+). Lysine 124 carries the post-translational modification N6-carboxylysine. Position 197 (cysteine 197) interacts with [2Fe-2S] cluster. Glutamate 494 contributes to the Mg(2+) binding site. Serine 520 acts as the Proton acceptor in catalysis.

The protein belongs to the IlvD/Edd family. Homodimer. The cofactor is [2Fe-2S] cluster. Mg(2+) is required as a cofactor.

The catalysed reaction is (2R)-2,3-dihydroxy-3-methylbutanoate = 3-methyl-2-oxobutanoate + H2O. It catalyses the reaction (2R,3R)-2,3-dihydroxy-3-methylpentanoate = (S)-3-methyl-2-oxopentanoate + H2O. The protein operates within amino-acid biosynthesis; L-isoleucine biosynthesis; L-isoleucine from 2-oxobutanoate: step 3/4. Its pathway is amino-acid biosynthesis; L-valine biosynthesis; L-valine from pyruvate: step 3/4. In terms of biological role, functions in the biosynthesis of branched-chain amino acids. Catalyzes the dehydration of (2R,3R)-2,3-dihydroxy-3-methylpentanoate (2,3-dihydroxy-3-methylvalerate) into 2-oxo-3-methylpentanoate (2-oxo-3-methylvalerate) and of (2R)-2,3-dihydroxy-3-methylbutanoate (2,3-dihydroxyisovalerate) into 2-oxo-3-methylbutanoate (2-oxoisovalerate), the penultimate precursor to L-isoleucine and L-valine, respectively. This Salinispora arenicola (strain CNS-205) protein is Dihydroxy-acid dehydratase.